We begin with the raw amino-acid sequence, 197 residues long: Imidazoleglycerol-phosphate dehydratase (197 aa).

The protein belongs to the imidazoleglycerol-phosphate dehydratase family.

Its subcellular location is the cytoplasm. It catalyses the reaction D-erythro-1-(imidazol-4-yl)glycerol 3-phosphate = 3-(imidazol-4-yl)-2-oxopropyl phosphate + H2O. It functions in the pathway amino-acid biosynthesis; L-histidine biosynthesis; L-histidine from 5-phospho-alpha-D-ribose 1-diphosphate: step 6/9. The sequence is that of Imidazoleglycerol-phosphate dehydratase from Pseudomonas putida (strain W619).